A 714-amino-acid chain; its full sequence is Inducible lysine decarboxylase (714 aa).

Lys367 is modified (N6-(pyridoxal phosphate)lysine).

It belongs to the Orn/Lys/Arg decarboxylase class-I family. As to quaternary structure, homodecamer. Interacts with RavA. Pyridoxal 5'-phosphate serves as cofactor.

It is found in the cytoplasm. It carries out the reaction L-lysine + H(+) = cadaverine + CO2. This chain is Inducible lysine decarboxylase (cadA), found in Salmonella typhi.